The sequence spans 185 residues: Elongation factor P (185 aa).

It belongs to the elongation factor P family.

The protein localises to the cytoplasm. Its pathway is protein biosynthesis; polypeptide chain elongation. Involved in peptide bond synthesis. Stimulates efficient translation and peptide-bond synthesis on native or reconstituted 70S ribosomes in vitro. Probably functions indirectly by altering the affinity of the ribosome for aminoacyl-tRNA, thus increasing their reactivity as acceptors for peptidyl transferase. The polypeptide is Elongation factor P (Mesomycoplasma hyopneumoniae (strain 7448) (Mycoplasma hyopneumoniae)).